We begin with the raw amino-acid sequence, 652 residues long: p-hydroxybenzoic acid efflux pump subunit AaeB (652 aa).

The next 11 membrane-spanning stretches (helical) occupy residues 8–28 (FPIK…HFNL), 34–54 (AVMT…GDPF), 64–84 (LRII…IATI), 88–108 (ALMM…SSLI), 118–138 (LAGY…SVLL), 149–169 (EIII…PRSV), 367–387 (LFWL…LAVI), 404–424 (FLYG…VIMP), 429–449 (SMLL…ILIQ), 453–473 (IGTL…NPMT), and 480–500 (LDNA…ILLI).

This sequence belongs to the aromatic acid exporter ArAE (TC 2.A.85) family.

It is found in the cell inner membrane. In terms of biological role, forms an efflux pump with AaeA. Could function as a metabolic relief valve, allowing to eliminate certain compounds when they accumulate to high levels in the cell. This Erwinia billingiae (strain Eb661) protein is p-hydroxybenzoic acid efflux pump subunit AaeB.